We begin with the raw amino-acid sequence, 110 residues long: Putative UPF0377 protein YKL223W (110 aa).

It belongs to the UPF0377 family.

This chain is Putative UPF0377 protein YKL223W, found in Saccharomyces cerevisiae (strain ATCC 204508 / S288c) (Baker's yeast).